We begin with the raw amino-acid sequence, 177 residues long: Thymidine kinase (177 aa).

Residue 11–18 (GPMFSGKS) coordinates ATP. Glu83 (proton acceptor) is an active-site residue. Position 113 (Phe113) interacts with substrate. Cys138 and Cys141 together coordinate Zn(2+). Residue 157–161 (IEIIG) participates in substrate binding. Residues Cys170 and Cys173 each contribute to the Zn(2+) site.

The protein belongs to the thymidine kinase family. In terms of assembly, homotetramer. Two molecules of substrate bind to each enzyme tetramer.

The enzyme catalyses thymidine + ATP = dTMP + ADP + H(+). Functionally, phosphorylates thymidine and thymidine analogs, such as azidothymidine (AZT). Part of the salvage pathway for pyrimidine deoxyribonucleotide synthesis. This is Thymidine kinase (OPG101) from Variola virus (isolate Human/India/Ind3/1967) (VARV).